A 466-amino-acid chain; its full sequence is 20-hydroxyecdysone protein (466 aa).

The signal sequence occupies residues Met-1 to Ala-16. The stretch at Glu-48–Lys-50 is one 1; approximate repeat. Residues Glu-48–Lys-157 are 16 X repeats. The stretch at Glu-53–Lys-55 is one 2; approximate repeat. Residues Lys-55 to Glu-94 form a disordered region. Residues Glu-58–Lys-60 form a 3; approximate repeat. The stretch at Asp-70 to Lys-72 is one 4; approximate repeat. The stretch at Glu-74 to Lys-76 is one 5; approximate repeat. A 6; approximate repeat occupies Glu-78–Lys-80. The 7; approximate repeat unit spans residues Glu-82–Lys-84. The stretch at Asp-90–Lys-92 is one 8; approximate repeat. Residues Glu-94–Lys-96 form a 9; approximate repeat. One copy of the 10; approximate repeat lies at Asp-98–Lys-100. One copy of the 11; approximate repeat lies at Asp-102–Lys-104. The 12; approximate repeat unit spans residues Glu-106–Lys-108. The tract at residues Pro-119–Val-220 is disordered. Residues Leu-124 to Pro-160 are compositionally biased toward basic and acidic residues. The 13; approximate repeat unit spans residues Glu-125–Lys-127. A 14; approximate repeat occupies Glu-139 to Lys-141. The stretch at Glu-148–Lys-150 is one 15; approximate repeat. A 16; approximate repeat occupies Glu-155–Lys-157. The span at Ala-170–Glu-180 shows a compositional bias: low complexity. Polar residues predominate over residues Pro-185–Gln-194. Low complexity predominate over residues Gln-203–Gln-216. Asn-294 and Asn-352 each carry an N-linked (GlcNAc...) asparagine glycan. The segment at Arg-378 to Val-435 is disordered. The span at Pro-379–Lys-394 shows a compositional bias: low complexity. Acidic residues predominate over residues Ala-404–Asp-416.

It localises to the secreted. Probably has an essential role in embryogenesis, induces morphogenesis of imaginal disks, and may participate in multimolecular aggregates. This is 20-hydroxyecdysone protein (ImpE2) from Drosophila melanogaster (Fruit fly).